The sequence spans 345 residues: uncharacterized protein (345 aa).

It belongs to the transketolase family. The cofactor is thiamine diphosphate.

This is an uncharacterized protein from Sinorhizobium fredii (strain NBRC 101917 / NGR234).